Here is a 402-residue protein sequence, read N- to C-terminus: F-box protein At4g22390 (402 aa).

The F-box domain maps to 1 to 49 (MAECPTDLINEMFLRLRATTLVKCRVLSKPCFSLIDSPEFVSSHLRRRL).

This is F-box protein At4g22390 from Arabidopsis thaliana (Mouse-ear cress).